Consider the following 286-residue polypeptide: Elongation factor Ts (286 aa).

The interval 82-85 (TDFV) is involved in Mg(2+) ion dislocation from EF-Tu.

It belongs to the EF-Ts family.

It is found in the cytoplasm. In terms of biological role, associates with the EF-Tu.GDP complex and induces the exchange of GDP to GTP. It remains bound to the aminoacyl-tRNA.EF-Tu.GTP complex up to the GTP hydrolysis stage on the ribosome. The sequence is that of Elongation factor Ts from Desulfovibrio desulfuricans (strain ATCC 27774 / DSM 6949 / MB).